Reading from the N-terminus, the 581-residue chain is Proline--tRNA ligase (581 aa).

It belongs to the class-II aminoacyl-tRNA synthetase family. ProS type 1 subfamily. Homodimer.

The protein resides in the cytoplasm. It catalyses the reaction tRNA(Pro) + L-proline + ATP = L-prolyl-tRNA(Pro) + AMP + diphosphate. In terms of biological role, catalyzes the attachment of proline to tRNA(Pro) in a two-step reaction: proline is first activated by ATP to form Pro-AMP and then transferred to the acceptor end of tRNA(Pro). As ProRS can inadvertently accommodate and process non-cognate amino acids such as alanine and cysteine, to avoid such errors it has two additional distinct editing activities against alanine. One activity is designated as 'pretransfer' editing and involves the tRNA(Pro)-independent hydrolysis of activated Ala-AMP. The other activity is designated 'posttransfer' editing and involves deacylation of mischarged Ala-tRNA(Pro). The misacylated Cys-tRNA(Pro) is not edited by ProRS. The protein is Proline--tRNA ligase of Leptothrix cholodnii (strain ATCC 51168 / LMG 8142 / SP-6) (Leptothrix discophora (strain SP-6)).